The primary structure comprises 466 residues: Ribulose bisphosphate carboxylase large chain (466 aa).

Lys5 carries the post-translational modification N6,N6,N6-trimethyllysine. Residues Asn114 and Thr164 each coordinate substrate. Catalysis depends on Lys166, which acts as the Proton acceptor. Residue Lys168 participates in substrate binding. Lys192, Asp194, and Glu195 together coordinate Mg(2+). N6-carboxylysine is present on Lys192. His285 (proton acceptor) is an active-site residue. Residues Arg286, His318, and Ser370 each contribute to the substrate site.

The protein belongs to the RuBisCO large chain family. Type I subfamily. As to quaternary structure, heterohexadecamer of 8 large chains and 8 small chains; disulfide-linked. The disulfide link is formed within the large subunit homodimers. Mg(2+) serves as cofactor. In terms of processing, the disulfide bond which can form in the large chain dimeric partners within the hexadecamer appears to be associated with oxidative stress and protein turnover.

Its subcellular location is the plastid. The protein resides in the chloroplast. The catalysed reaction is 2 (2R)-3-phosphoglycerate + 2 H(+) = D-ribulose 1,5-bisphosphate + CO2 + H2O. It catalyses the reaction D-ribulose 1,5-bisphosphate + O2 = 2-phosphoglycolate + (2R)-3-phosphoglycerate + 2 H(+). In terms of biological role, ruBisCO catalyzes two reactions: the carboxylation of D-ribulose 1,5-bisphosphate, the primary event in carbon dioxide fixation, as well as the oxidative fragmentation of the pentose substrate in the photorespiration process. Both reactions occur simultaneously and in competition at the same active site. The protein is Ribulose bisphosphate carboxylase large chain of Eremothamnus marlothianus.